Here is a 346-residue protein sequence, read N- to C-terminus: Large ribosomal subunit protein uL3 (346 aa).

The segment at 324–346 (RPPKKKPPVERPQITYVSRESKQ) is disordered.

The protein belongs to the universal ribosomal protein uL3 family. As to quaternary structure, part of the 50S ribosomal subunit. Forms a cluster with proteins L14 and L24e.

One of the primary rRNA binding proteins, it binds directly near the 3'-end of the 23S rRNA, where it nucleates assembly of the 50S subunit. The protein is Large ribosomal subunit protein uL3 of Thermococcus kodakarensis (strain ATCC BAA-918 / JCM 12380 / KOD1) (Pyrococcus kodakaraensis (strain KOD1)).